The chain runs to 85 residues: Cytochrome c2 (85 aa).

Residues cysteine 12, cysteine 15, histidine 16, and methionine 61 each coordinate heme c.

Belongs to the cytochrome c family. Post-translationally, binds 1 heme c group covalently per subunit.

Functionally, cytochrome c2 is found mainly in purple, non-sulfur, photosynthetic bacteria where it functions as the electron donor to the oxidized bacteriochlorophyll in the photophosphorylation pathway. However, it may also have a role in the respiratory chain and is found in some non-photosynthetic bacteria. This chain is Cytochrome c2, found in Rubrivivax gelatinosus (Rhodocyclus gelatinosus).